The sequence spans 449 residues: Biotin carboxylase (449 aa).

The Biotin carboxylation domain occupies 1 to 445 (MLEKVLIANR…NIHYLEKKLG (445 aa)). Residues Lys116, Lys159, 165 to 166 (GG), 201 to 204 (EKFL), His209, and His236 contribute to the ATP site. The 198-residue stretch at 120–317 (KDAMKRAGVP…IVKEMLRIAS (198 aa)) folds into the ATP-grasp domain. Lys238 lines the hydrogencarbonate pocket. Residues Glu276 and Glu288 each contribute to the ATP site. Residues Glu276, Glu288, and Asn290 each contribute to the Mg(2+) site. Mn(2+) is bound by residues Glu276, Glu288, and Asn290. Arg292, Val295, and Arg338 together coordinate hydrogencarbonate. Arg292 is an active-site residue. Arg338 is a biotin binding site.

Acetyl-CoA carboxylase is a heterohexamer of biotin carboxyl carrier protein, biotin carboxylase and the two subunits of carboxyl transferase in a 2:2 complex. Mg(2+) is required as a cofactor. Mn(2+) serves as cofactor.

The enzyme catalyses N(6)-biotinyl-L-lysyl-[protein] + hydrogencarbonate + ATP = N(6)-carboxybiotinyl-L-lysyl-[protein] + ADP + phosphate + H(+). It participates in lipid metabolism; malonyl-CoA biosynthesis; malonyl-CoA from acetyl-CoA: step 1/1. This protein is a component of the acetyl coenzyme A carboxylase complex; first, biotin carboxylase catalyzes the carboxylation of the carrier protein and then the transcarboxylase transfers the carboxyl group to form malonyl-CoA. This Pseudomonas aeruginosa (strain ATCC 15692 / DSM 22644 / CIP 104116 / JCM 14847 / LMG 12228 / 1C / PRS 101 / PAO1) protein is Biotin carboxylase (accC).